Consider the following 289-residue polypeptide: 3-methyl-2-oxobutanoate hydroxymethyltransferase (289 aa).

Mg(2+) contacts are provided by D58 and D99. 3-methyl-2-oxobutanoate contacts are provided by residues 58–59 (DS), D99, and K128. E130 is a Mg(2+) binding site. Residue E197 is the Proton acceptor of the active site.

The protein belongs to the PanB family. As to quaternary structure, homodecamer; pentamer of dimers. The cofactor is Mg(2+).

It is found in the cytoplasm. The enzyme catalyses 3-methyl-2-oxobutanoate + (6R)-5,10-methylene-5,6,7,8-tetrahydrofolate + H2O = 2-dehydropantoate + (6S)-5,6,7,8-tetrahydrofolate. The protein operates within cofactor biosynthesis; (R)-pantothenate biosynthesis; (R)-pantoate from 3-methyl-2-oxobutanoate: step 1/2. Its function is as follows. Catalyzes the reversible reaction in which hydroxymethyl group from 5,10-methylenetetrahydrofolate is transferred onto alpha-ketoisovalerate to form ketopantoate. This is 3-methyl-2-oxobutanoate hydroxymethyltransferase from Leptothrix cholodnii (strain ATCC 51168 / LMG 8142 / SP-6) (Leptothrix discophora (strain SP-6)).